Here is an 899-residue protein sequence, read N- to C-terminus: ATP-dependent DNA helicase DDX31 (899 aa).

Basic residues-rich tracts occupy residues 1-12 (MNKHDQKKKRNK) and 21-31 (KKSKGFIKNKK). Residues 1 to 142 (MNKHDQKKKR…SKHKRNVPSK (142 aa)) are disordered. A compositionally biased stretch (acidic residues) spans 76–85 (NMNDDDDNNM). The segment covering 86–102 (NDDYNNNNIKGDYNNNN) has biased composition (low complexity). Over residues 106–121 (DDVDDDDYDDDDDDNF) the composition is skewed to acidic residues. A Q motif motif is present at residues 173-201 (FCDLKYILSESLINTLEKNEFIKMTSIQK). The region spanning 204 to 433 (IPLFFKPNDI…NYCLTNNTMW (230 aa)) is the Helicase ATP-binding domain. 217-224 (SMTGSGKT) serves as a coordination point for ATP. Positions 332-335 (DEAD) match the DEAD box motif. Polar residues predominate over residues 463–472 (NRENSPLNIH). Residues 463 to 517 (NRENSPLNIHNNDDNDDNDDNDENNGDNNNNNDDNNNNNDDNNNKNNDDDNNNTY) form a disordered region. Positions 476-487 (DNDDNDDNDENN) are enriched in acidic residues. Residues 488-503 (GDNNNNNDDNNNNNDD) are compositionally biased toward low complexity. Residues 593–782 (KITPVLERED…TIINHFKKFC (190 aa)) form the Helicase C-terminal domain.

This sequence belongs to the DEAD box helicase family. DDX31/DBP7 subfamily.

Its subcellular location is the nucleus. It localises to the nucleolus. It carries out the reaction ATP + H2O = ADP + phosphate + H(+). In terms of biological role, has DNA helicase activity and may also have RNA helicase activity; the DNA helicase direction was not determined. Shows ssDNA and RNA dependent ATPase activity. The sequence is that of ATP-dependent DNA helicase DDX31 (DDX31) from Plasmodium falciparum (isolate 3D7).